A 286-amino-acid polypeptide reads, in one-letter code: MLKYPEIDPVALSLGSVTVFGKTINLPDIHWYGLMYLFGFILCWAVGTYRAGKPHNVVHKSWLEDLVFYVAMGVVLGGRCGYVFFYNFGAFLDDPLWLFRVWEGGMSFHGGLLGVILAMMLYARKMQVRFLDLMDFVAPLVPIGLGLGRIGNFIGQELWGRVTTLPIGMVFPKDPGVARHPSQLYQAALEGLVLFAVLFWFSSKPRPRAAVASLFLILYGCFRFAVEFVREPDAHIGFDMFGWLTRGQELSLPMIIIGALIFFYAYRHPAYAEKAPDPRANGSKKG.

7 helical membrane-spanning segments follow: residues 29 to 49 (IHWY…VGTY), 66 to 86 (LVFY…VFFY), 101 to 121 (VWEG…AMML), 130 to 150 (FLDL…LGRI), 181 to 201 (PSQL…LFWF), 209 to 229 (AAVA…VEFV), and 250 to 270 (LSLP…RHPA). Arg-149 contributes to the a 1,2-diacyl-sn-glycero-3-phospho-(1'-sn-glycerol) binding site.

The protein belongs to the Lgt family.

The protein resides in the cell inner membrane. The catalysed reaction is L-cysteinyl-[prolipoprotein] + a 1,2-diacyl-sn-glycero-3-phospho-(1'-sn-glycerol) = an S-1,2-diacyl-sn-glyceryl-L-cysteinyl-[prolipoprotein] + sn-glycerol 1-phosphate + H(+). The protein operates within protein modification; lipoprotein biosynthesis (diacylglyceryl transfer). Its function is as follows. Catalyzes the transfer of the diacylglyceryl group from phosphatidylglycerol to the sulfhydryl group of the N-terminal cysteine of a prolipoprotein, the first step in the formation of mature lipoproteins. The protein is Phosphatidylglycerol--prolipoprotein diacylglyceryl transferase of Teredinibacter turnerae (strain ATCC 39867 / T7901).